Reading from the N-terminus, the 259-residue chain is 14-3-3-like protein (259 aa).

The segment at 238 to 259 (MQDPAAGDDREGADMKVEDAEP) is disordered. Over residues 244–259 (GDDREGADMKVEDAEP) the composition is skewed to basic and acidic residues.

It belongs to the 14-3-3 family.

The polypeptide is 14-3-3-like protein (Chlamydomonas reinhardtii (Chlamydomonas smithii)).